The sequence spans 371 residues: NDMA-dependent alcohol dehydrogenase (371 aa).

Residues cysteine 40, histidine 61, cysteine 91, cysteine 94, cysteine 97, cysteine 105, and cysteine 167 each coordinate Zn(2+).

Belongs to the zinc-containing alcohol dehydrogenase family. In terms of assembly, homotrimer. NADH is required as a cofactor.

It catalyses the reaction N,N-dimethyl-4-nitrosoaniline + a primary alcohol = 4-(hydroxylamino)-N,N-dimethylaniline + an aldehyde. The catalysed reaction is ethanol + A = acetaldehyde + AH2. With respect to regulation, inhibited by trans-4-(N,N-dimethylamino)-cinnamaldehyde through direct binding to the catalytic zinc ion in a substrate-like geometry. Isobutyramide acts as a competitive inhibitor with respect to the electron acceptor NDMA. Acetaldehyde, AMP, ADP, ATP, as well as CuSO(4), FeSO(4), HgCl(2), NiCl(2), ZnSO(4), KCN, and NaN(3) are additional inhibitors of the catalytic activity. Its function is as follows. Catalytically different from common alcohol dehydrogenases. Effective in oxidizing ethanol, other primary alcohols and benzylalcohol only in the presence of p-nitroso-N,N-dimethylaniline (NDMA) as an electron acceptor. NADH acts as a cofactor here instead as a coenzyme. The sequence is that of NDMA-dependent alcohol dehydrogenase from Amycolatopsis methanolica.